The following is a 60-amino-acid chain: Large ribosomal subunit protein uL30 (60 aa).

It belongs to the universal ribosomal protein uL30 family. As to quaternary structure, part of the 50S ribosomal subunit.

This chain is Large ribosomal subunit protein uL30, found in Syntrophobacter fumaroxidans (strain DSM 10017 / MPOB).